Reading from the N-terminus, the 520-residue chain is Probable E3 ubiquitin-protein ligase XBOS33 (520 aa).

5 ANK repeats span residues G44–V73, C77–R106, S111–P140, G185–A214, and A228–L258. The RING-type zinc finger occupies C327–R377. Residues Q467–H479 show a composition bias toward polar residues. The disordered stretch occupies residues Q467 to L493. The span at E484–L493 shows a compositional bias: basic and acidic residues.

The catalysed reaction is S-ubiquitinyl-[E2 ubiquitin-conjugating enzyme]-L-cysteine + [acceptor protein]-L-lysine = [E2 ubiquitin-conjugating enzyme]-L-cysteine + N(6)-ubiquitinyl-[acceptor protein]-L-lysine.. It functions in the pathway protein modification; protein ubiquitination. In Oryza sativa subsp. japonica (Rice), this protein is Probable E3 ubiquitin-protein ligase XBOS33 (XBOS33).